The following is a 356-amino-acid chain: MTDRKNGLTYADAGVDIDAGNRLVDLIKPMVRATARAGADAEIGGFGGLFDLKAAGFTDPVLVAANDGVGTKVKIAIETGIHDTIGIDLVAMSVNDLVVQGAEPLFFLDYFACGKLDPEVASAIVAGIAVGCREAGCALIGGETAEMPGLYKDGDYDLAGFAVGAAERGTLLPGRDIAAGDAVIGLASSGVHSNGYSLVRKIVEASGLGFSVPAPFAPVTTLGGALLTPTRLYVKSCLRAIRETGAVKGLAHITGGGFTDNIPRVLPKHLGIRIDLSRLTVLPVFKWLARQGGIAELELLRTFNCGVGMIAIVRRDAVEQVVDVLTQAGERVAPLGSVIEASGDRVVYDNHLDLAM.

The protein belongs to the AIR synthase family.

The protein resides in the cytoplasm. The catalysed reaction is 2-formamido-N(1)-(5-O-phospho-beta-D-ribosyl)acetamidine + ATP = 5-amino-1-(5-phospho-beta-D-ribosyl)imidazole + ADP + phosphate + H(+). It functions in the pathway purine metabolism; IMP biosynthesis via de novo pathway; 5-amino-1-(5-phospho-D-ribosyl)imidazole from N(2)-formyl-N(1)-(5-phospho-D-ribosyl)glycinamide: step 2/2. This Nitrobacter hamburgensis (strain DSM 10229 / NCIMB 13809 / X14) protein is Phosphoribosylformylglycinamidine cyclo-ligase.